Reading from the N-terminus, the 277-residue chain is Outer plastidial membrane protein porin (277 aa).

Belongs to the eukaryotic mitochondrial porin (TC 1.B.8.1) family.

The protein localises to the plastid outer membrane. In terms of biological role, forms a channel through the cell membrane that allows diffusion of small hydrophilic molecules. The channel adopts an open conformation at low or zero membrane potential and a closed conformation at potentials above 30-40 mV. The open state has a weak anion selectivity whereas the closed state is cation-selective. This is Outer plastidial membrane protein porin (POR1) from Zea mays (Maize).